Here is a 154-residue protein sequence, read N- to C-terminus: uncharacterized protein (154 aa).

The segment at M1–N37 is disordered. The span at N12–N37 shows a compositional bias: low complexity. The N-linked (GlcNAc...) asparagine glycan is linked to N82. A helical membrane pass occupies residues I116–A136. N149 carries an N-linked (GlcNAc...) asparagine glycan.

It is found in the membrane. This is an uncharacterized protein from Dictyostelium discoideum (Social amoeba).